The chain runs to 712 residues: Cyclolysin secretion/processing ATP-binding protein CyaB (712 aa).

The Peptidase C39 domain occupies 7–128; sequence QCASVPDSGL…ALWAGELLLC (122 aa). The 283-residue stretch at 157–439 folds into the ABC transmembrane type-1 domain; it reads IGEVLLISLV…LAQLWNDFQQ (283 aa). Helical transmembrane passes span 160–180, 194–214, 272–292, 298–318, 367–387, and 390–410; these read VLLI…FFQV, LNVI…LTGI, AVTV…MFFY, LVVL…TPVL, VAAG…VTLI, and LVAL…RMTV. The ABC transporter domain maps to 471–706; the sequence is IELDRVSFRY…GGLYARLQAL (236 aa). Residue 505 to 512 participates in ATP binding; sequence GRSGSGKS.

Belongs to the ABC transporter superfamily. Cyclolysin exporter (TC 3.A.1.109.2) family.

The protein resides in the cell membrane. Functionally, involved in the export of calmodulin-sensitive adenylate cyclase-hemolysin (cyclolysin). This Bordetella pertussis (strain Tohama I / ATCC BAA-589 / NCTC 13251) protein is Cyclolysin secretion/processing ATP-binding protein CyaB (cyaB).